The sequence spans 63 residues: MSKTVVRKNESLDDALRRFKRSVSRNGTLQEYRKREFYEKPSVKRKLKSEAARKRKNKRGRRY.

Basic and acidic residues predominate over residues 40 to 52 (KPSVKRKLKSEAA). The interval 40–63 (KPSVKRKLKSEAARKRKNKRGRRY) is disordered. A compositionally biased stretch (basic residues) spans 53–63 (RKRKNKRGRRY).

Belongs to the bacterial ribosomal protein bS21 family.

The polypeptide is Small ribosomal subunit protein bS21 (Limosilactobacillus reuteri (strain DSM 20016) (Lactobacillus reuteri)).